The primary structure comprises 269 residues: Malonyl-[acyl-carrier protein] O-methyltransferase (269 aa).

It belongs to the methyltransferase superfamily.

It carries out the reaction malonyl-[ACP] + S-adenosyl-L-methionine = malonyl-[ACP] methyl ester + S-adenosyl-L-homocysteine. The protein operates within cofactor biosynthesis; biotin biosynthesis. In terms of biological role, converts the free carboxyl group of a malonyl-thioester to its methyl ester by transfer of a methyl group from S-adenosyl-L-methionine (SAM). It allows to synthesize pimeloyl-ACP via the fatty acid synthetic pathway. This Bacillus anthracis protein is Malonyl-[acyl-carrier protein] O-methyltransferase.